The sequence spans 331 residues: Ribose operon repressor (331 aa).

The HTH lacI-type domain maps to 1-56; the sequence is MTTIRDVAKHAKVSVATVSRVLNKKGYVSKEAEEAVLQAIKELNYQPSSVARSLYH. A DNA-binding region (H-T-H motif) is located at residues 4–23; it reads IRDVAKHAKVSVATVSRVLN.

Its function is as follows. Transcriptional repressor for the ribose rbsDACBK operon. This chain is Ribose operon repressor (rbsR), found in Halalkalibacterium halodurans (strain ATCC BAA-125 / DSM 18197 / FERM 7344 / JCM 9153 / C-125) (Bacillus halodurans).